We begin with the raw amino-acid sequence, 153 residues long: Transcriptional repressor NrdR (153 aa).

A zinc finger lies at 3 to 34 (CPFCHNQDTRVIDSRAAEEGTAIRRRRSCPAC). The 91-residue stretch at 46 to 136 (LMVTKRSGAT…VYRSFESLED (91 aa)) folds into the ATP-cone domain.

This sequence belongs to the NrdR family. The cofactor is Zn(2+).

Functionally, negatively regulates transcription of bacterial ribonucleotide reductase nrd genes and operons by binding to NrdR-boxes. The sequence is that of Transcriptional repressor NrdR from Thermobifida fusca (strain YX).